Reading from the N-terminus, the 401-residue chain is Patatin-like protein 4 (401 aa).

The PNPLA domain maps to 17–218 (LSLDGGGVRG…TANDPTLVGM (202 aa)). Positions 21–26 (GGGVRG) match the GXGXXG motif. The short motif at 60–64 (GTSTG) is the GXSXG element. The Nucleophile role is filled by Ser-62. The active-site Proton acceptor is the Asp-205. A DGA/G motif is present at residues 205–207 (DGG).

Belongs to the patatin family.

Its function is as follows. Possesses non-specific lipolytic acyl hydrolase (LAH) activity. Hydrolyzes phospholipids as well as galactolipids. May play a role in disease resistance. This is Patatin-like protein 4 (PLP4) from Arabidopsis thaliana (Mouse-ear cress).